Here is a 1039-residue protein sequence, read N- to C-terminus: RNA-binding protein Unr (1039 aa).

The span at 49–62 (TTLGLQPQGQGPSP) shows a compositional bias: polar residues. Disordered stretches follow at residues 49–126 (TTLG…QQQH) and 165–184 (SIFG…PSQT). 3 stretches are compositionally biased toward low complexity: residues 63 to 80 (QQQQ…QHQQ), 89 to 126 (QQHM…QQQH), and 165 to 182 (SIFG…ADPS). A CSD 1 domain is found at 186 to 250 (RETGIIEKLL…GKPIASQVSK (65 aa)). The CSD 2; degenerate domain occupies 261-337 (RVTGTVTTEL…GNLGACHIRL (77 aa)). Positions 345 to 413 (KYRGVVCSMK…GREFACNITR (69 aa)) constitute a CSD 3 domain. Residues 428–503 (VYKGQVLKSL…RDQLQRATSI (76 aa)) form the CSD 4; degenerate domain. Residues 517–585 (REQGTIASLK…SRLQAIRIKH (69 aa)) enclose the CSD 5 domain. In terms of domain architecture, CSD 6; degenerate spans 593–673 (FETLVASNIE…KECIAVNVQQ (81 aa)). The disordered stretch occupies residues 721 to 741 (QNGYVMHGSPGGSTSSVGSNN). Low complexity predominate over residues 732–741 (GSTSSVGSNN). The 69-residue stretch at 763–831 (VYRGFIAVMK…NCLPAENVRM (69 aa)) folds into the CSD 7 domain. The region spanning 846 to 919 (THNGVVARPL…SGRAACVNAV (74 aa)) is the CSD 8; degenerate domain. A CSD 9 domain is found at 922–987 (KKRATVDSIK…GKSSACNVLK (66 aa)).

It belongs to the UNR family. As to quaternary structure, interacts with Sxl; cooperates with Sxl to prevent translation of msl-2 transcripts. Interacts with mle; promoting association between mle and roX2 non-coding RNA. Interacts (via CSD domain 7-9) with pAbp; promoting translation inhibition of msl-2 transcripts.

Its subcellular location is the cytoplasm. Its function is as follows. RNA-binding protein that acts as a regulator of dosage compensation in both males and females. In males, acts as positive regulator of dosage compensation by promoting assembly of the MSL complex, a multiprotein complex that mediates X-chromosome dosage compensation. Promotes MSL complex assembly via association with roX1 and roX2 non-coding RNA components of the MSL complex, facilitating the interaction between non-coding RNAs and mle. In females, acts as an inhibitor of dosage compensation together with Sxl by preventing production of msl-2 protein, an essential component of the MSL complex. Specifically binds to the 3'-UTR of msl-2 transcripts, and cooperates with Sxl to prevent translation initiation of msl-2 transcripts. Mechanistically, Sxl and Unr inhibit translation initiation by preventing ribosome recruitment after pAbp-mediated recruitment of the eIF4F complex. The chain is RNA-binding protein Unr from Drosophila melanogaster (Fruit fly).